Here is a 223-residue protein sequence, read N- to C-terminus: FAD-dependent monooxygenase imqC (223 aa).

Residues 139 to 141 (RFY), Tyr189, and Asp210 each bind FAD.

It belongs to the PheA/TfdB FAD monooxygenase family.

Its pathway is secondary metabolite biosynthesis. FAD-dependent monooxygenase; part of the gene cluster that mediates the biosynthesis of imizoquins A to D, tripeptide-derived alkaloids that serve a protective role against oxidative stress that are essential for normal germination. ImqB is a canonical three-module NRPS that assembles the tripeptide backbone of the imizoquins via condensation of Trp, Tyr, and Leu-derived precursors. N-methylation by imqF and phenol oxidation by imqC, followed by cyclization via the FAD-dependent oxidase imqH carry out the three-step transformation of L-tyrosine into tetrahydroisoquinoline. Importantly, this sequence requires the presence of a free amine in the tyrosine moiety, indicating that isoquinoline formation occurs prior to peptide bond formation. The imidazolidin-4-one ring of imizoquins could form following additional oxidation of the methyl-derived bridgehead carbon by imqH. Lastly, O-methylation by imqG and leucine hydroxylation by imqE complete biosynthesis of the imizoquins. The sequence is that of FAD-dependent monooxygenase imqC from Aspergillus flavus (strain ATCC 200026 / FGSC A1120 / IAM 13836 / NRRL 3357 / JCM 12722 / SRRC 167).